We begin with the raw amino-acid sequence, 301 residues long: Methionine aminopeptidase (301 aa).

Residue His-65 participates in substrate binding. The a divalent metal cation site is built by Asp-85, Asp-96, and His-156. Position 164 (His-164) interacts with substrate. A divalent metal cation-binding residues include Glu-189 and Glu-284.

This sequence belongs to the peptidase M24A family. Methionine aminopeptidase archaeal type 2 subfamily. As to quaternary structure, monomer. The cofactor is Co(2+). Zn(2+) is required as a cofactor. It depends on Mn(2+) as a cofactor. Requires Fe(2+) as cofactor.

It carries out the reaction Release of N-terminal amino acids, preferentially methionine, from peptides and arylamides.. In terms of biological role, removes the N-terminal methionine from nascent proteins. The N-terminal methionine is often cleaved when the second residue in the primary sequence is small and uncharged (Met-Ala-, Cys, Gly, Pro, Ser, Thr, or Val). The chain is Methionine aminopeptidase from Saccharolobus solfataricus (strain ATCC 35092 / DSM 1617 / JCM 11322 / P2) (Sulfolobus solfataricus).